The chain runs to 223 residues: AMSH-like ubiquitin thioesterase 2 (223 aa).

An MPN domain is found at V49–G177. Zn(2+) contacts are provided by H127, H129, D140, H142, C185, H191, and H193. The short motif at H127 to D140 is the JAMM motif element.

The protein belongs to the peptidase M67C family. Zn(2+) serves as cofactor.

Functionally, zinc metalloprotease that cleaves 'Lys-48'- and 'Lys-63'-linked polyubiquitin chains. The protein is AMSH-like ubiquitin thioesterase 2 (AMSH2) of Arabidopsis thaliana (Mouse-ear cress).